Consider the following 366-residue polypeptide: Outer membrane porin C 2 (366 aa).

A signal peptide spans 1–21 (MKLKIVAVVVTGLLAANVAHA).

It belongs to the Gram-negative porin family. As to quaternary structure, homotrimer. Forms mixed heterotrimers with OmpF and with PhoE; other mixed heterotrimers are also probable.

Its subcellular location is the cell outer membrane. In terms of biological role, forms pores that allow passive diffusion of small molecules across the outer membrane. Plays a role in virulence. The chain is Outer membrane porin C 2 from Shigella flexneri serotype 5a (strain M90T).